We begin with the raw amino-acid sequence, 100 residues long: Integration host factor subunit alpha (100 aa).

Positions phenylalanine 53–valine 72 are disordered.

This sequence belongs to the bacterial histone-like protein family. As to quaternary structure, heterodimer of an alpha and a beta chain.

This protein is one of the two subunits of integration host factor, a specific DNA-binding protein that functions in genetic recombination as well as in transcriptional and translational control. This chain is Integration host factor subunit alpha, found in Neisseria meningitidis serogroup C (strain 053442).